A 133-amino-acid chain; its full sequence is ATP synthase epsilon chain, chloroplastic (133 aa).

Belongs to the ATPase epsilon chain family. As to quaternary structure, F-type ATPases have 2 components, CF(1) - the catalytic core - and CF(0) - the membrane proton channel. CF(1) has five subunits: alpha(3), beta(3), gamma(1), delta(1), epsilon(1). CF(0) has three main subunits: a, b and c.

The protein localises to the plastid. Its subcellular location is the chloroplast thylakoid membrane. Functionally, produces ATP from ADP in the presence of a proton gradient across the membrane. The protein is ATP synthase epsilon chain, chloroplastic of Jasminum nudiflorum (Winter jasmine).